A 238-amino-acid chain; its full sequence is Probable transcriptional regulatory protein TC_0742 (238 aa).

The interval 1 to 21 (MAGHSKWANTKHRKERADHKK) is disordered. A compositionally biased stretch (basic residues) spans 9 to 21 (NTKHRKERADHKK).

The protein belongs to the TACO1 family.

Its subcellular location is the cytoplasm. The chain is Probable transcriptional regulatory protein TC_0742 from Chlamydia muridarum (strain MoPn / Nigg).